We begin with the raw amino-acid sequence, 322 residues long: Lymphatic vessel endothelial hyaluronic acid receptor 1 (322 aa).

Positions 1-19 are cleaved as a signal peptide; that stretch reads MARCFSLVLLLTSIWTTRL. At 20–238 the chain is on the extracellular side; sequence LVQGSLRAEE…EAAGFGGVPT (219 aa). The 91-residue stretch at 40 to 130 folds into the Link domain; the sequence is GITLVSKKAN…SRQFAAYCYN (91 aa). An N-linked (GlcNAc...) asparagine glycan is attached at N53. 2 cysteine pairs are disulfide-bonded: C61–C128 and C85–C106. N-linked (GlcNAc...) asparagine glycosylation is present at N130. A helical membrane pass occupies residues 239-259; that stretch reads ALLVLALLFFGAAAGLGFCYV. At 260–322 the chain is on the cytoplasmic side; it reads KRYVKAFPFT…TTVRCLEAEV (63 aa). Basic and acidic residues predominate over residues 279–309; that stretch reads ETKVVKEEKANDSNPNEESKKTDKNPEESKS. Positions 279–322 are disordered; the sequence is ETKVVKEEKANDSNPNEESKKTDKNPEESKSPSKTTVRCLEAEV.

As to quaternary structure, homodimer; disulfide-linked. Interacts with PDGFB and IGFBP3. Forms a transient ternary complex with PDGFB and PDGFRB in TGN. In terms of processing, O-glycosylated. In terms of tissue distribution, mainly expressed in endothelial cells lining lymphatic vessels.

The protein resides in the cell membrane. Functionally, ligand-specific transporter trafficking between intracellular organelles (TGN) and the plasma membrane. Plays a role in autocrine regulation of cell growth mediated by growth regulators containing cell surface retention sequence binding (CRS). May act as a hyaluronan (HA) transporter, either mediating its uptake for catabolism within lymphatic endothelial cells themselves, or its transport into the lumen of afferent lymphatic vessels for subsequent re-uptake and degradation in lymph nodes. Binds to pericelluar hyaluronan matrices deposited on the surface of leukocytes and facilitates cell adhesion and migration through lymphatic endothelium. The protein is Lymphatic vessel endothelial hyaluronic acid receptor 1 (LYVE1) of Homo sapiens (Human).